The following is a 507-amino-acid chain: ATP synthase subunit alpha, chloroplastic (507 aa).

Position 170-177 (170-177 (GDRQTGKT)) interacts with ATP.

It belongs to the ATPase alpha/beta chains family. In terms of assembly, F-type ATPases have 2 components, CF(1) - the catalytic core - and CF(0) - the membrane proton channel. CF(1) has five subunits: alpha(3), beta(3), gamma(1), delta(1), epsilon(1). CF(0) has four main subunits: a, b, b' and c.

Its subcellular location is the plastid. It is found in the chloroplast thylakoid membrane. It catalyses the reaction ATP + H2O + 4 H(+)(in) = ADP + phosphate + 5 H(+)(out). In terms of biological role, produces ATP from ADP in the presence of a proton gradient across the membrane. The alpha chain is a regulatory subunit. The chain is ATP synthase subunit alpha, chloroplastic from Anthoceros angustus (Hornwort).